Here is a 449-residue protein sequence, read N- to C-terminus: uncharacterized protein (449 aa).

Residues 1-11 (MLDAPEQDPVD) are compositionally biased toward acidic residues. The tract at residues 1 to 33 (MLDAPEQDPVDPGDPASPPHGEAEQPLPGPRWP) is disordered. A helical transmembrane segment spans residues 45 to 65 (LLLTALGGLLIAGLVTAIPAV). Residues 349-449 (QPPVPPPDIP…PGPAEPAPAG (101 aa)) form a disordered region. Residues 365 to 387 (PPIPLQLPTPRPAPPAQQLPSTP) are compositionally biased toward pro residues. Residues 409–418 (HAPASAAPAE) are compositionally biased toward low complexity. Residues 437–449 (ATPPGPAEPAPAG) show a composition bias toward pro residues.

The protein resides in the cell membrane. It localises to the secreted. In terms of biological role, may play a role in septum formation. This is an uncharacterized protein from Mycobacterium tuberculosis (strain CDC 1551 / Oshkosh).